The sequence spans 297 residues: Transmembrane protein 178A (297 aa).

The signal sequence occupies residues 1 to 25; that stretch reads MEPRALVTALSLGLSLCSLGLLVTA. The Extracellular portion of the chain corresponds to 26 to 179; it reads IFTDHWYETD…LLHLRRITAG (154 aa). Basic and acidic residues predominate over residues 41–57; that stretch reads ESCERSRAGADPPDQKN. Residues 41-86 form a disordered region; sequence ESCERSRAGADPPDQKNRLMPLSHLPLRDSPPLGRRLLPGGPGRSD. Residues 68–79 show a composition bias toward low complexity; it reads RDSPPLGRRLLP. Asparagine 158 carries N-linked (GlcNAc...) asparagine glycosylation. The helical transmembrane segment at 180 to 200 threads the bilayer; the sequence is FLGMAVAVLLCGCIVATVSFF. Residues 201–208 are Cytoplasmic-facing; the sequence is WEESLTQH. A helical transmembrane segment spans residues 209 to 229; that stretch reads VAGLLFLMTGIFCTISLCTYA. Residues 230–257 lie on the Extracellular side of the membrane; it reads ASVSYDLNRVPKLIYSLPHDVEHGYSWS. A helical transmembrane segment spans residues 258–278; it reads IFCAWCSLGFIVAAGGLCIAY. Over 279-297 the chain is Cytoplasmic; it reads PFISRTKIAHLKSGRDSTV.

This sequence belongs to the TMEM178 family. As to quaternary structure, interacts with STIM1. As to expression, highly expressed in the bone and its expression increases during osteoclastogenesis.

The protein resides in the endoplasmic reticulum membrane. Its function is as follows. Acts as a negative regulator of osteoclast differentiation in basal and inflammatory conditions by regulating TNFSF11-induced Ca (2+) fluxes, thereby controlling the induction of NFATC1. The protein is Transmembrane protein 178A (Tmem178a) of Mus musculus (Mouse).